The primary structure comprises 624 residues: Probable potassium transport system protein Kup 2 (624 aa).

12 helical membrane passes run 14–34, 51–71, 97–117, 133–153, 163–183, 211–231, 245–265, 283–303, 335–355, 364–384, 393–413, and 416–436; these read LSFA…LYAF, ILSL…LVIV, GGWL…DGML, LSPN…FFLF, IGVY…ILGF, SALF…ALFA, WFAV…AFVL, FLPV…QAII, VYLP…VVIF, AYGI…GIIA, FKIL…AGNI, and LLTG…VMYT.

It belongs to the HAK/KUP transporter (TC 2.A.72) family.

It localises to the cell inner membrane. The catalysed reaction is K(+)(in) + H(+)(in) = K(+)(out) + H(+)(out). Transport of potassium into the cell. Likely operates as a K(+):H(+) symporter. The polypeptide is Probable potassium transport system protein Kup 2 (Legionella pneumophila (strain Lens)).